The primary structure comprises 37 residues: Large ribosomal subunit protein bL36 (37 aa).

This sequence belongs to the bacterial ribosomal protein bL36 family.

The protein is Large ribosomal subunit protein bL36 (rpmJ) of Mycobacterium tuberculosis (strain ATCC 25618 / H37Rv).